Reading from the N-terminus, the 461-residue chain is Coronin-1A (461 aa).

Ser2 carries the N-acetylserine modification. Phosphoserine; by PKC is present on Ser2. WD repeat units follow at residues His13 to Pro63, Asn73 to Glu110, Pro123 to Asp160, Gly164 to Glu204, Lys207 to Asp251, Pro258 to Glu296, and Pro302 to Ala349. Basic and acidic residues predominate over residues Asn407–Thr418. The disordered stretch occupies residues Asn407–Ser431. Ser412 bears the Phosphoserine; by PKC mark. At Thr418 the chain carries Phosphothreonine. The span at Glu420 to Val430 shows a compositional bias: polar residues. Ser422 bears the Phosphoserine mark. The stretch at Leu425–Lys461 forms a coiled coil.

This sequence belongs to the WD repeat coronin family. As to quaternary structure, binds actin. Post-translationally, phosphorylation at Ser-412 by PKC strongly down-regulates the association with actin. In terms of processing, polyubiquitinated by RNF128 with 'Lys-48'-linked chains, leading to proteasomal degradation.

The protein resides in the cytoplasm. The protein localises to the cytoskeleton. Its subcellular location is the cell cortex. It localises to the cytoplasmic vesicle. It is found in the phagosome membrane. Its function is as follows. May be a crucial component of the cytoskeleton of highly motile cells, functioning both in the invagination of large pieces of plasma membrane, as well as in forming protrusions of the plasma membrane involved in cell locomotion. This is Coronin-1A (Coro1a) from Rattus norvegicus (Rat).